Consider the following 189-residue polypeptide: UPF0688 protein C1orf174 homolog (189 aa).

The segment at 53 to 137 is disordered; the sequence is QMAGDGGEAK…TTDPSVFFDE (85 aa). Basic and acidic residues-rich tracts occupy residues 59-73 and 93-103; these read GEAKRLPKRPFHGEV and APGERRGKENS.

The protein belongs to the UPF0688 family.

The protein localises to the nucleus. The chain is UPF0688 protein C1orf174 homolog from Danio rerio (Zebrafish).